Here is a 675-residue protein sequence, read N- to C-terminus: DNA ligase (675 aa).

NAD(+) contacts are provided by residues 36–40, 85–86, and Glu117; these read DAAYD and SL. Lys119 acts as the N6-AMP-lysine intermediate in catalysis. Residues Arg140, Glu177, Lys294, and Lys318 each coordinate NAD(+). Zn(2+) contacts are provided by Cys412, Cys415, Cys430, and Cys436. The 79-residue stretch at 597-675 folds into the BRCT domain; sequence AEDLPLSGNT…EAEFLELIGE (79 aa).

The protein belongs to the NAD-dependent DNA ligase family. LigA subfamily. Mg(2+) serves as cofactor. Mn(2+) is required as a cofactor.

It carries out the reaction NAD(+) + (deoxyribonucleotide)n-3'-hydroxyl + 5'-phospho-(deoxyribonucleotide)m = (deoxyribonucleotide)n+m + AMP + beta-nicotinamide D-nucleotide.. Functionally, DNA ligase that catalyzes the formation of phosphodiester linkages between 5'-phosphoryl and 3'-hydroxyl groups in double-stranded DNA using NAD as a coenzyme and as the energy source for the reaction. It is essential for DNA replication and repair of damaged DNA. In Thioalkalivibrio sulfidiphilus (strain HL-EbGR7), this protein is DNA ligase.